A 142-amino-acid polypeptide reads, in one-letter code: Protein NIM1-INTERACTING 1 (142 aa).

The interval 47–53 (DTFFKLI) is involved in NPR1/NIM1 interaction. Residues 60-64 (RKRRR) carry the Nuclear localization signal motif. Disordered stretches follow at residues 63-86 (RREE…RSGI) and 108-142 (MFVS…NLAL). Positions 110–141 (VSDHKEENTKVEQEEDQTEERNEDKALDLNLA) form a coiled coil. Basic and acidic residues predominate over residues 111–121 (SDHKEENTKVE).

The protein belongs to the NPR1-interactor family. As to quaternary structure, interacts with NPR1 C-terminal region.

The protein resides in the nucleus. This is Protein NIM1-INTERACTING 1 from Arabidopsis thaliana (Mouse-ear cress).